Consider the following 269-residue polypeptide: Tryptophan synthase alpha chain (269 aa).

Catalysis depends on proton acceptor residues Glu-49 and Asp-60.

The protein belongs to the TrpA family. Tetramer of two alpha and two beta chains.

The catalysed reaction is (1S,2R)-1-C-(indol-3-yl)glycerol 3-phosphate + L-serine = D-glyceraldehyde 3-phosphate + L-tryptophan + H2O. Its pathway is amino-acid biosynthesis; L-tryptophan biosynthesis; L-tryptophan from chorismate: step 5/5. Its function is as follows. The alpha subunit is responsible for the aldol cleavage of indoleglycerol phosphate to indole and glyceraldehyde 3-phosphate. This is Tryptophan synthase alpha chain from Photobacterium profundum (strain SS9).